Reading from the N-terminus, the 79-residue chain is Hematopoietic cell signal transducer (79 aa).

Residues 1 to 18 (MIHPGHILFLLLLPVAAA) form the signal peptide. The Extracellular segment spans residues 19-34 (QTTPGSCSGCGSLSLP). Residues 35–55 (LLAGLVAADAVASPLIVGAVF) form a helical membrane-spanning segment. At 56–79 (LCARPRRSPAQGDGKVYINMPGRG) the chain is on the cytoplasmic side. Residue Tyr72 is modified to Phosphotyrosine. The tract at residues 72-74 (YIN) is GRB2 binding site. A PIK3R1 binding site region spans residues 72-75 (YINM).

This sequence belongs to the DAP10 family. As to quaternary structure, homodimer; Disulfide-linked. Heterohexamer composed of four subunits of HCST/DAP10 and two subunits of KLRK1. Interacts (via transmembrane domain) with KLRK1 (via transmembrane domain); the interaction is required for KLRK1 NK cell surface and induces NK cell-mediated cytotoxicity. Interacts with PIK3R1 and GRB2. Interacts with CLEC5A. Forms an CLEC5A/TYROBP/HCST trimolecular complex depending almost solely on TYROBP. Interacts with CD300H. Phosphorylated; PIK3R1 and GRB2 associate specifically with tyrosine-phosphorylated HCST. Post-translationally, O-glycosylated.

The protein localises to the membrane. Transmembrane adapter protein which associates with KLRK1 to form an activation receptor KLRK1-HCST in lymphoid and myeloid cells; this receptor plays a major role in triggering cytotoxicity against target cells expressing cell surface ligands such as MHC class I chain-related MICA and MICB, and UL16-binding proteins (ULBPs); these ligands are up-regulated by stress conditions and pathological state such as viral infection and tumor transformation. Functions as a docking site for PI3-kinase PIK3R1 and GRB2. Interaction of ULBPs with KLRK1-HCST triggers calcium mobilization and activation of the PIK3R1, MAP2K/ERK, and JAK2/STAT5 signaling pathways. Both PIK3R1 and GRB2 are required for full KLRK1-HCST-mediated activation and ultimate killing of target cells. In NK cells, KLRK1-HCST signaling directly induces cytotoxicity and enhances cytokine production initiated via DAP12/TYROBP-associated receptors. In T-cells, it provides primarily costimulation for TCR-induced signals. KLRK1-HCST receptor plays a role in immune surveillance against tumors and is required for cytolysis of tumors cells; indeed, melanoma cells that do not express KLRK1 ligands escape from immune surveillance mediated by NK cells. This chain is Hematopoietic cell signal transducer (HCST), found in Macaca mulatta (Rhesus macaque).